We begin with the raw amino-acid sequence, 367 residues long: Apolipoprotein A-V (367 aa).

A signal peptide spans Met1–Ala20. Position 52 is a phosphoserine (Ser52). Residues Thr231–Phe255 adopt a coiled-coil conformation. A disordered region spans residues Glu305–Lys332.

The protein belongs to the apolipoprotein A1/A4/E family. In terms of assembly, interacts with GPIHBP1. Interacts with SORL1; this interaction leads to APOA5 internalization and sorting either to lysosomes and degradation, or to the trans-Golgi network. In terms of processing, phosphorylated by FAM20C in the extracellular medium. As to expression, liver.

It is found in the secreted. Its subcellular location is the early endosome. The protein localises to the late endosome. The protein resides in the golgi apparatus. It localises to the trans-Golgi network. Functionally, minor apolipoprotein mainly associated with HDL and to a lesser extent with VLDL. May also be associated with chylomicrons. Important determinant of plasma triglyceride (TG) levels by both being a potent stimulator of apo-CII lipoprotein lipase (LPL) TG hydrolysis and an inhibitor of the hepatic VLDL-TG production rate (without affecting the VLDL-apoB production rate). Activates poorly lecithin:cholesterol acyltransferase (LCAT) and does not enhance efflux of cholesterol from macrophages. Binds heparin. This is Apolipoprotein A-V (Apoa5) from Rattus norvegicus (Rat).